The sequence spans 400 residues: Argininosuccinate synthase (400 aa).

Residues 10-18 (AYSGGVDTS) and alanine 38 contribute to the ATP site. Tyrosine 89 lines the L-citrulline pocket. Glycine 119 contacts ATP. Residues threonine 121, asparagine 125, and aspartate 126 each contribute to the L-aspartate site. Asparagine 125 is an L-citrulline binding site. Residues arginine 129, serine 177, serine 186, glutamate 262, and tyrosine 274 each contribute to the L-citrulline site.

Belongs to the argininosuccinate synthase family. Type 1 subfamily. Homotetramer.

The protein resides in the cytoplasm. It catalyses the reaction L-citrulline + L-aspartate + ATP = 2-(N(omega)-L-arginino)succinate + AMP + diphosphate + H(+). The protein operates within amino-acid biosynthesis; L-arginine biosynthesis; L-arginine from L-ornithine and carbamoyl phosphate: step 2/3. The protein is Argininosuccinate synthase of Trichormus variabilis (strain ATCC 29413 / PCC 7937) (Anabaena variabilis).